The sequence spans 572 residues: Glutamate--tRNA ligase (572 aa).

The 'HIGH' region signature appears at 107 to 117; that stretch reads PNPDGAFHLGN.

This sequence belongs to the class-I aminoacyl-tRNA synthetase family. Glutamate--tRNA ligase type 2 subfamily.

The protein localises to the cytoplasm. The catalysed reaction is tRNA(Glu) + L-glutamate + ATP = L-glutamyl-tRNA(Glu) + AMP + diphosphate. In terms of biological role, catalyzes the attachment of glutamate to tRNA(Glu) in a two-step reaction: glutamate is first activated by ATP to form Glu-AMP and then transferred to the acceptor end of tRNA(Glu). The protein is Glutamate--tRNA ligase of Pyrococcus furiosus (strain ATCC 43587 / DSM 3638 / JCM 8422 / Vc1).